A 318-amino-acid chain; its full sequence is Thymidylate synthase (318 aa).

DUMP is bound by residues arginine 25 and 180–181 (RR). The active-site Nucleophile is cysteine 200. Residues 220–223 (RSGD), asparagine 231, and 261–263 (HIY) contribute to the dUMP site. Aspartate 223 is a binding site for (6R)-5,10-methylene-5,6,7,8-tetrahydrofolate. (6R)-5,10-methylene-5,6,7,8-tetrahydrofolate is bound at residue alanine 317.

This sequence belongs to the thymidylate synthase family. Bacterial-type ThyA subfamily. As to quaternary structure, homodimer.

Its subcellular location is the cytoplasm. It carries out the reaction dUMP + (6R)-5,10-methylene-5,6,7,8-tetrahydrofolate = 7,8-dihydrofolate + dTMP. It functions in the pathway pyrimidine metabolism; dTTP biosynthesis. Functionally, catalyzes the reductive methylation of 2'-deoxyuridine-5'-monophosphate (dUMP) to 2'-deoxythymidine-5'-monophosphate (dTMP) while utilizing 5,10-methylenetetrahydrofolate (mTHF) as the methyl donor and reductant in the reaction, yielding dihydrofolate (DHF) as a by-product. This enzymatic reaction provides an intracellular de novo source of dTMP, an essential precursor for DNA biosynthesis. This is Thymidylate synthase from Lactobacillus acidophilus (strain ATCC 700396 / NCK56 / N2 / NCFM).